Here is a 499-residue protein sequence, read N- to C-terminus: Probable cytosol aminopeptidase (499 aa).

Residues K263 and D268 each contribute to the Mn(2+) site. The active site involves K275. Mn(2+) is bound by residues D286, D345, and E347. The active site involves R349.

This sequence belongs to the peptidase M17 family. Mn(2+) serves as cofactor.

The protein localises to the cytoplasm. It catalyses the reaction Release of an N-terminal amino acid, Xaa-|-Yaa-, in which Xaa is preferably Leu, but may be other amino acids including Pro although not Arg or Lys, and Yaa may be Pro. Amino acid amides and methyl esters are also readily hydrolyzed, but rates on arylamides are exceedingly low.. The catalysed reaction is Release of an N-terminal amino acid, preferentially leucine, but not glutamic or aspartic acids.. Presumably involved in the processing and regular turnover of intracellular proteins. Catalyzes the removal of unsubstituted N-terminal amino acids from various peptides. In Chlamydia caviae (strain ATCC VR-813 / DSM 19441 / 03DC25 / GPIC) (Chlamydophila caviae), this protein is Probable cytosol aminopeptidase.